We begin with the raw amino-acid sequence, 103 residues long: Large ribosomal subunit protein uL24 (103 aa).

This sequence belongs to the universal ribosomal protein uL24 family. In terms of assembly, part of the 50S ribosomal subunit.

Functionally, one of two assembly initiator proteins, it binds directly to the 5'-end of the 23S rRNA, where it nucleates assembly of the 50S subunit. Its function is as follows. One of the proteins that surrounds the polypeptide exit tunnel on the outside of the subunit. This Alkaliphilus metalliredigens (strain QYMF) protein is Large ribosomal subunit protein uL24.